The primary structure comprises 269 residues: Senescence-associated protein 13 (269 aa).

21 to 45 (LVTGGSKGIGEAVVEELAMLGAKVH) serves as a coordination point for NADP(+). Serine 154 lines the substrate pocket. Tyrosine 167 functions as the Proton acceptor in the catalytic mechanism.

This sequence belongs to the short-chain dehydrogenases/reductases (SDR) family. SDR65C subfamily.

In terms of biological role, unspecific reductase providing both diastereomeric alcohols from the prochiral ketones. Active on cyclic monoterpenes and small flexible lipophilic carbonyls. No activity with tropinone, nitrogen-containing tropinone analogs, tropine or pseudotropine as substrate. The sequence is that of Senescence-associated protein 13 from Arabidopsis thaliana (Mouse-ear cress).